Here is a 284-residue protein sequence, read N- to C-terminus: Bifunctional protein FolD (284 aa).

Residues 166–168 and Ile232 contribute to the NADP(+) site; that span reads GAS.

It belongs to the tetrahydrofolate dehydrogenase/cyclohydrolase family. As to quaternary structure, homodimer.

It catalyses the reaction (6R)-5,10-methylene-5,6,7,8-tetrahydrofolate + NADP(+) = (6R)-5,10-methenyltetrahydrofolate + NADPH. The enzyme catalyses (6R)-5,10-methenyltetrahydrofolate + H2O = (6R)-10-formyltetrahydrofolate + H(+). Its pathway is one-carbon metabolism; tetrahydrofolate interconversion. Catalyzes the oxidation of 5,10-methylenetetrahydrofolate to 5,10-methenyltetrahydrofolate and then the hydrolysis of 5,10-methenyltetrahydrofolate to 10-formyltetrahydrofolate. In Shewanella baltica (strain OS195), this protein is Bifunctional protein FolD.